The following is a 237-amino-acid chain: Terpene cyclase spyD (237 aa).

7 helical membrane-spanning segments follow: residues 17–37 (IYNV…IVTV), 47–67 (AIPL…VLVY), 71–91 (YLLF…IVYG), 109–129 (HLPL…YALA), 138–158 (IHGG…CQLL), 167–187 (SWTM…GEFL), and 206–226 (WCTG…WYMG).

Belongs to the paxB family.

It is found in the membrane. The catalysed reaction is (S)-(2E,6E,10E)-epoxygeranylgeranyl-triacetate lactone = sartorypyrone F. It catalyses the reaction (S)-(2E,6E,10E)-epoxygeranylgeranyl-triacetate lactone = sartorypyrone D. The protein operates within secondary metabolite biosynthesis; terpenoid biosynthesis. In terms of biological role, terpene cyclase; part of the gene cluster that mediates the biosynthesis of meroterpenoids called sartorypyrones. Within the pathway, spyD catalyzes the cyclization of epoxygeranylgeranyl-triacetate lactone. SpyD exhibits promiscuous activity, resulting in the formation of bicyclic sartorypyrone F and monocyclic sartorypyrone D. The biosynthesis of sartorypyrones begins with the production of triacetic acid lactone (TAL) by the NR-PKS spyA using one molecule of acetyl-CoA and two molecules of malonyl-CoA. The prenyltransferase spyF then conjugates geranylgeranyl pyrophosphate (GGPP) to TAL to form geranylgeranyl-triacetate lactone, for which the pathway-specific geranylgeranyl pyrophosphate synthase (GGPS) spyE is required to provide GGPP. Subsequently, geranylgeranyl-triacetate lactone is epoxidized at the terminal olein by the FAD-dependent monooxygenase spyC, followed by cyclization of the terpenoid component catalyzed by the terpene cyclase spyD to produce both the bicyclic sartorypyrone F and the monocyclic sartorypyrone D. Finally, the last step of the biosynthesis involves the acetylation of the meroterpenoids sartorypyrones D and F by the acetyltransferase SpyB to produce sartorypyrones A and G, respectively. The polypeptide is Terpene cyclase spyD (Aspergillus fumigatus (strain ATCC MYA-4609 / CBS 101355 / FGSC A1100 / Af293) (Neosartorya fumigata)).